A 227-amino-acid chain; its full sequence is Enolase-phosphatase E1 (227 aa).

It belongs to the HAD-like hydrolase superfamily. MasA/MtnC family. As to quaternary structure, monomer. Mg(2+) is required as a cofactor.

It carries out the reaction 5-methylsulfanyl-2,3-dioxopentyl phosphate + H2O = 1,2-dihydroxy-5-(methylsulfanyl)pent-1-en-3-one + phosphate. Its pathway is amino-acid biosynthesis; L-methionine biosynthesis via salvage pathway; L-methionine from S-methyl-5-thio-alpha-D-ribose 1-phosphate: step 3/6. The protein operates within amino-acid biosynthesis; L-methionine biosynthesis via salvage pathway; L-methionine from S-methyl-5-thio-alpha-D-ribose 1-phosphate: step 4/6. Bifunctional enzyme that catalyzes the enolization of 2,3-diketo-5-methylthiopentyl-1-phosphate (DK-MTP-1-P) into the intermediate 2-hydroxy-3-keto-5-methylthiopentenyl-1-phosphate (HK-MTPenyl-1-P), which is then dephosphorylated to form the acireductone 1,2-dihydroxy-3-keto-5-methylthiopentene (DHK-MTPene). This is Enolase-phosphatase E1 from Pseudomonas savastanoi pv. phaseolicola (strain 1448A / Race 6) (Pseudomonas syringae pv. phaseolicola (strain 1448A / Race 6)).